The chain runs to 406 residues: Eukaryotic initiation factor 4A-I (406 aa).

The tract at residues 1–21 (MSASQDSRSRDNGPDGMEPEG) is disordered. Ser-2 is modified (N-acetylserine). Ser-4 is modified (phosphoserine). Positions 32 to 60 (DSFDDMNLSESLLRGIYAYGFEKPSAIQQ) match the Q motif motif. The Helicase ATP-binding domain maps to 63–234 (ILPCIKGYDV…KKFMRDPIRI (172 aa)). 76–83 (AQSGTGKT) is an ATP binding site. Lys-118 carries the post-translational modification N6-acetyllysine. Lys-146 participates in a covalent cross-link: Glycyl lysine isopeptide (Lys-Gly) (interchain with G-Cter in SUMO2). Thr-158 is modified (phosphothreonine). Lys-174 is subject to N6-acetyllysine. The DEAD box motif lies at 182–185 (DEAD). Lys-193 carries the post-translational modification N6-acetyllysine. Lys-225 is covalently cross-linked (Glycyl lysine isopeptide (Lys-Gly) (interchain with G-Cter in SUMO2)). N6-acetyllysine; alternate is present on Lys-238. Lys-238 is covalently cross-linked (Glycyl lysine isopeptide (Lys-Gly) (interchain with G-Cter in SUMO2); alternate). A Helicase C-terminal domain is found at 245 to 406 (GIRQFYINVE…EMPLNVADLI (162 aa)). Residues Lys-309, Lys-369, and Lys-381 each participate in a glycyl lysine isopeptide (Lys-Gly) (interchain with G-Cter in SUMO2) cross-link.

Belongs to the DEAD box helicase family. eIF4A subfamily. EIF4F is a multi-subunit complex, the composition of which varies with external and internal environmental conditions. It is composed of at least EIF4A, EIF4E and EIF4G1/EIF4G3. Interacts with PAIP1, EIF4E and UPF2. Found in a complex with XPO7, EIF4A1, ARHGAP1, VPS26A, VPS29, VPS35 and SFN. May interact with NOM1. Interacts with PDCD4; this interferes with the interaction between EIF4A and EIF4G. Interacts with RBM4. Interacts with DDX3X in an RNA-independent manner. Interacts with PKP1 (via N-terminus); the interaction promotes EIF4A1 recruitment to the cap-dependent translation complex and EIF4A1 ATPase activity.

It is found in the cytoplasm. It localises to the perinuclear region. The protein localises to the cell membrane. The protein resides in the stress granule. The catalysed reaction is ATP + H2O = ADP + phosphate + H(+). Its function is as follows. ATP-dependent RNA helicase which is a subunit of the eIF4F complex involved in cap recognition and is required for mRNA binding to ribosome. In the current model of translation initiation, eIF4A unwinds RNA secondary structures in the 5'-UTR of mRNAs which is necessary to allow efficient binding of the small ribosomal subunit, and subsequent scanning for the initiator codon. As a result, promotes cell proliferation and growth. The sequence is that of Eukaryotic initiation factor 4A-I (EIF4A1) from Bos taurus (Bovine).